The following is a 483-amino-acid chain: MAYIEGNTGKWEYVIGLEIHAQISSKSKLFSGSSTIFAANPNSQVSYIDAAMPGMLPVLNKHCVHQAIKTGLGLKAKINKYSVFDRKNYFYADLPQGYQISQFYYPIVQNGTMEIPTSTGDLKTIRINRLHLEQDAGKSMHDQSPHYSFIDLNRAGIGLMEIVTEPDISSPEEAAEFVKKLRNLLRYIGSCDGDMEKGSMRCDANISVRRSGEPLGTRCEIKNINSIRNIIKAIEFEAKRQVDLLESGEEIIQETRLFNADSGETRTMRLKEEALDYRYFPDPDLLPLVISDELINELKANLPELPDQKIEKYTKEFSLSKYDAEVIVADESVAEYFEKAANECNPKMLTNWLTSELFGQLNKASIGINECKITPSNFAKLVKLIENDTISGKIAKTVFEIMFETGKAPDKIIEEKGLVQVSDNNVLNTVIDEVIAENPESVEGYRSGKDKLFGFFVGQVMKKTDGKANPTLVNQLLKEKLSS.

The protein belongs to the GatB/GatE family. GatB subfamily. In terms of assembly, heterotrimer of A, B and C subunits.

It catalyses the reaction L-glutamyl-tRNA(Gln) + L-glutamine + ATP + H2O = L-glutaminyl-tRNA(Gln) + L-glutamate + ADP + phosphate + H(+). The catalysed reaction is L-aspartyl-tRNA(Asn) + L-glutamine + ATP + H2O = L-asparaginyl-tRNA(Asn) + L-glutamate + ADP + phosphate + 2 H(+). In terms of biological role, allows the formation of correctly charged Asn-tRNA(Asn) or Gln-tRNA(Gln) through the transamidation of misacylated Asp-tRNA(Asn) or Glu-tRNA(Gln) in organisms which lack either or both of asparaginyl-tRNA or glutaminyl-tRNA synthetases. The reaction takes place in the presence of glutamine and ATP through an activated phospho-Asp-tRNA(Asn) or phospho-Glu-tRNA(Gln). The protein is Aspartyl/glutamyl-tRNA(Asn/Gln) amidotransferase subunit B of Rickettsia rickettsii (strain Sheila Smith).